The sequence spans 151 residues: Large ribosomal subunit protein uL22 (151 aa).

Residues 1-18 are compositionally biased toward polar residues; sequence MARINYSINGDPETTSKA. Positions 1-23 are disordered; that stretch reads MARINYSINGDPETTSKAMGSEL.

It belongs to the universal ribosomal protein uL22 family. Part of the 50S ribosomal subunit.

In terms of biological role, this protein binds specifically to 23S rRNA. It makes multiple contacts with different domains of the 23S rRNA in the assembled 50S subunit and ribosome. The globular domain of the protein is located near the polypeptide exit tunnel on the outside of the subunit, while an extended beta-hairpin is found that lines the wall of the exit tunnel in the center of the 70S ribosome. The chain is Large ribosomal subunit protein uL22 from Methanosarcina acetivorans (strain ATCC 35395 / DSM 2834 / JCM 12185 / C2A).